The sequence spans 209 residues: Methylthioribulose-1-phosphate dehydratase (209 aa).

2 residues coordinate Zn(2+): His99 and His101.

The protein belongs to the aldolase class II family. MtnB subfamily. Zn(2+) serves as cofactor.

The enzyme catalyses 5-(methylsulfanyl)-D-ribulose 1-phosphate = 5-methylsulfanyl-2,3-dioxopentyl phosphate + H2O. It functions in the pathway amino-acid biosynthesis; L-methionine biosynthesis via salvage pathway; L-methionine from S-methyl-5-thio-alpha-D-ribose 1-phosphate: step 2/6. Its function is as follows. Catalyzes the dehydration of methylthioribulose-1-phosphate (MTRu-1-P) into 2,3-diketo-5-methylthiopentyl-1-phosphate (DK-MTP-1-P). This Leptospira biflexa serovar Patoc (strain Patoc 1 / Ames) protein is Methylthioribulose-1-phosphate dehydratase.